The following is a 1966-amino-acid chain: Probable serine/threonine-protein kinase vps15 (1966 aa).

The Protein kinase domain occupies 21–303 (IVFKKSLGNA…QYFSFAHQFI (283 aa)). ATP is bound by residues 27-35 (LGNARFLKT) and Lys49. The active-site Proton acceptor is Asp144. Residues 362-407 (PILISNNNNNNNNNNNNNNNNNNNNNNNNNNNNNNNNNQTTTTTTN) form a disordered region. The segment covering 367–407 (NNNNNNNNNNNNNNNNNNNNNNNNNNNNNNNNNQTTTTTTN) has biased composition (low complexity). HEAT repeat units lie at residues 558 to 596 (CRLQ…MVQT), 604 to 642 (IFGQ…TAKR), 717 to 754 (KTNE…VVGA), and 756 to 793 (SLES…LGLL). Disordered stretches follow at residues 916-937 (SFNS…TGGS), 1036-1062 (SSSN…TNST), 1106-1130 (GGIT…TGLN), and 1190-1263 (TSLS…NNMN). Low complexity-rich tracts occupy residues 1106 to 1119 (GGIT…TTLG) and 1192 to 1263 (LSNS…NNMN). WD repeat units follow at residues 1460–1499 (EHKA…KSVT), 1508–1547 (QQEG…KQKN), 1564–1605 (TTRG…DAFN), and 1610–1649 (ASLG…PLYS). Positions 1699-1743 (RSYEQPPQQQPQQPQPPQQQQQQQSQMNRSINMTSSTTTTTTSSY) are disordered. Low complexity-rich tracts occupy residues 1703–1722 (QPPQ…QQQQ) and 1732–1742 (TSSTTTTTTSS). WD repeat units follow at residues 1790 to 1829 (KPTP…QSYY) and 1935 to 1966 (HHQE…KVWK).

This sequence belongs to the protein kinase superfamily. Ser/Thr protein kinase family.

It carries out the reaction L-seryl-[protein] + ATP = O-phospho-L-seryl-[protein] + ADP + H(+). The catalysed reaction is L-threonyl-[protein] + ATP = O-phospho-L-threonyl-[protein] + ADP + H(+). The polypeptide is Probable serine/threonine-protein kinase vps15 (vps15) (Dictyostelium discoideum (Social amoeba)).